A 549-amino-acid chain; its full sequence is Glucoamylase, intracellular sporulation-specific (549 aa).

W198 is a binding site for substrate. D261 serves as the catalytic Proton acceptor. The Proton donor role is filled by E264.

The protein belongs to the glycosyl hydrolase 15 family.

It catalyses the reaction Hydrolysis of terminal (1-&gt;4)-linked alpha-D-glucose residues successively from non-reducing ends of the chains with release of beta-D-glucose.. This is Glucoamylase, intracellular sporulation-specific (SGA1) from Saccharomyces cerevisiae (strain ATCC 204508 / S288c) (Baker's yeast).